Here is a 279-residue protein sequence, read N- to C-terminus: Bifunctional protein FolD (279 aa).

Residues 166–168 and serine 191 each bind NADP(+); that span reads GRS.

This sequence belongs to the tetrahydrofolate dehydrogenase/cyclohydrolase family. As to quaternary structure, homodimer.

It catalyses the reaction (6R)-5,10-methylene-5,6,7,8-tetrahydrofolate + NADP(+) = (6R)-5,10-methenyltetrahydrofolate + NADPH. The enzyme catalyses (6R)-5,10-methenyltetrahydrofolate + H2O = (6R)-10-formyltetrahydrofolate + H(+). The protein operates within one-carbon metabolism; tetrahydrofolate interconversion. Catalyzes the oxidation of 5,10-methylenetetrahydrofolate to 5,10-methenyltetrahydrofolate and then the hydrolysis of 5,10-methenyltetrahydrofolate to 10-formyltetrahydrofolate. The chain is Bifunctional protein FolD from Shouchella clausii (strain KSM-K16) (Alkalihalobacillus clausii).